Here is a 193-residue protein sequence, read N- to C-terminus: Large ribosomal subunit protein eL18 (193 aa).

Residues 158–193 are disordered; the sequence is HFGAAGVPGSHAKPFTSNRGKERQRSSARRRAFRHK. Positions 183-193 are enriched in basic residues; the sequence is SSARRRAFRHK.

It belongs to the eukaryotic ribosomal protein eL18 family.

The protein resides in the cytoplasm. The sequence is that of Large ribosomal subunit protein eL18 (RPL18) from Trypanosoma cruzi (strain CL Brener).